The primary structure comprises 257 residues: tRNA (guanine-N(1)-)-methyltransferase (257 aa).

Residues Gly-113 and 133-138 (IGDYVL) contribute to the S-adenosyl-L-methionine site.

This sequence belongs to the RNA methyltransferase TrmD family. In terms of assembly, homodimer.

The protein localises to the cytoplasm. The enzyme catalyses guanosine(37) in tRNA + S-adenosyl-L-methionine = N(1)-methylguanosine(37) in tRNA + S-adenosyl-L-homocysteine + H(+). Specifically methylates guanosine-37 in various tRNAs. The polypeptide is tRNA (guanine-N(1)-)-methyltransferase (Cronobacter sakazakii (strain ATCC BAA-894) (Enterobacter sakazakii)).